Consider the following 325-residue polypeptide: Tetraacyldisaccharide 4'-kinase (325 aa).

55-62 (TAGGNGKT) is a binding site for ATP.

Belongs to the LpxK family.

The catalysed reaction is a lipid A disaccharide + ATP = a lipid IVA + ADP + H(+). It participates in glycolipid biosynthesis; lipid IV(A) biosynthesis; lipid IV(A) from (3R)-3-hydroxytetradecanoyl-[acyl-carrier-protein] and UDP-N-acetyl-alpha-D-glucosamine: step 6/6. Functionally, transfers the gamma-phosphate of ATP to the 4'-position of a tetraacyldisaccharide 1-phosphate intermediate (termed DS-1-P) to form tetraacyldisaccharide 1,4'-bis-phosphate (lipid IVA). This Salmonella paratyphi C (strain RKS4594) protein is Tetraacyldisaccharide 4'-kinase.